The chain runs to 283 residues: Bifunctional protein FolD (283 aa).

NADP(+) contacts are provided by residues 164–166 (GRS), S189, and I230.

The protein belongs to the tetrahydrofolate dehydrogenase/cyclohydrolase family. Homodimer.

It carries out the reaction (6R)-5,10-methylene-5,6,7,8-tetrahydrofolate + NADP(+) = (6R)-5,10-methenyltetrahydrofolate + NADPH. The enzyme catalyses (6R)-5,10-methenyltetrahydrofolate + H2O = (6R)-10-formyltetrahydrofolate + H(+). It participates in one-carbon metabolism; tetrahydrofolate interconversion. In terms of biological role, catalyzes the oxidation of 5,10-methylenetetrahydrofolate to 5,10-methenyltetrahydrofolate and then the hydrolysis of 5,10-methenyltetrahydrofolate to 10-formyltetrahydrofolate. The chain is Bifunctional protein FolD from Lacticaseibacillus paracasei (strain ATCC 334 / BCRC 17002 / CCUG 31169 / CIP 107868 / KCTC 3260 / NRRL B-441) (Lactobacillus paracasei).